Reading from the N-terminus, the 666-residue chain is Translation factor guf1, mitochondrial (666 aa).

The transit peptide at 1–43 (MRGCLQLARWLRAAPKCPAASLLKPPSGLANPARFFTTSTACW) directs the protein to the mitochondrion. The region spanning 68–248 (DRYRNFCIVA…TVVEKIPAPV (181 aa)) is the tr-type G domain. Residues 77–84 (AHVDHGKS), 141–145 (DTPGH), and 195–198 (NKVD) contribute to the GTP site.

It belongs to the TRAFAC class translation factor GTPase superfamily. Classic translation factor GTPase family. LepA subfamily.

The protein resides in the mitochondrion inner membrane. The catalysed reaction is GTP + H2O = GDP + phosphate + H(+). Promotes mitochondrial protein synthesis. May act as a fidelity factor of the translation reaction, by catalyzing a one-codon backward translocation of tRNAs on improperly translocated ribosomes. Binds to mitochondrial ribosomes in a GTP-dependent manner. This Aspergillus niger (strain ATCC MYA-4892 / CBS 513.88 / FGSC A1513) protein is Translation factor guf1, mitochondrial (guf1).